Here is a 238-residue protein sequence, read N- to C-terminus: Ribitol-5-phosphate cytidylyltransferase 2 (238 aa).

Residues 7 to 10 and 81 to 87 each bind CTP; these read LAGG and GTDRNET.

This sequence belongs to the IspD/TarI cytidylyltransferase family. TarI subfamily.

It carries out the reaction D-ribitol 5-phosphate + CTP + H(+) = CDP-L-ribitol + diphosphate. The protein operates within cell wall biogenesis; poly(ribitol phosphate) teichoic acid biosynthesis. Its function is as follows. Catalyzes the transfer of the cytidylyl group of CTP to D-ribitol 5-phosphate. This is Ribitol-5-phosphate cytidylyltransferase 2 from Staphylococcus aureus (strain bovine RF122 / ET3-1).